A 397-amino-acid chain; its full sequence is Putative efflux system protein YvrP (397 aa).

Residues 8–28 (LIGGAICAGVLVLAGIGAGGF) form a helical membrane-spanning segment. The stretch at 106-183 (EDHSDEVEQA…KELAGLTKNK (78 aa)) forms a coiled coil.

This sequence belongs to the membrane fusion protein (MFP) (TC 8.A.1) family.

It is found in the cell membrane. This chain is Putative efflux system protein YvrP (yvrP), found in Bacillus subtilis (strain 168).